The chain runs to 211 residues: Uracil phosphoribosyltransferase (211 aa).

Residues R77, R102, and D129–S137 contribute to the 5-phospho-alpha-D-ribose 1-diphosphate site. Residues I192 and G197–A199 contribute to the uracil site. Position 198 (D198) interacts with 5-phospho-alpha-D-ribose 1-diphosphate.

Belongs to the UPRTase family. It depends on Mg(2+) as a cofactor.

The catalysed reaction is UMP + diphosphate = 5-phospho-alpha-D-ribose 1-diphosphate + uracil. Its pathway is pyrimidine metabolism; UMP biosynthesis via salvage pathway; UMP from uracil: step 1/1. Allosterically activated by GTP. Functionally, catalyzes the conversion of uracil and 5-phospho-alpha-D-ribose 1-diphosphate (PRPP) to UMP and diphosphate. This Corynebacterium aurimucosum (strain ATCC 700975 / DSM 44827 / CIP 107346 / CN-1) (Corynebacterium nigricans) protein is Uracil phosphoribosyltransferase.